Consider the following 615-residue polypeptide: Probable ATP-citrate synthase subunit 1 (615 aa).

ATP contacts are provided by residues 221–241 and 272–298; these read LIRF…EVGG and FKTE…KNQA. A Mg(2+)-binding site is contributed by E238. The Tele-phosphohistidine intermediate role is filled by H280. 299-309 serves as a coordination point for CoA; sequence MREAGIYVPET. A Phosphoserine modification is found at S359.

This sequence belongs to the succinate/malate CoA ligase alpha subunit family. In terms of assembly, composed of two subunits.

Its subcellular location is the cytoplasm. The enzyme catalyses oxaloacetate + acetyl-CoA + ADP + phosphate = citrate + ATP + CoA. In terms of biological role, catalyzes the formation of cytosolic acetyl-CoA, which is mainly used for the biosynthesis of fatty acids and sterols. The protein is Probable ATP-citrate synthase subunit 1 of Schizosaccharomyces pombe (strain 972 / ATCC 24843) (Fission yeast).